The primary structure comprises 149 residues: Cytochrome c-type biogenesis protein CcmE (149 aa).

At 1–8 the chain is on the cytoplasmic side; that stretch reads MNPKRKQR. A helical; Signal-anchor for type II membrane protein transmembrane segment spans residues 9 to 29; sequence LIIVSFLVIGVSATVGLIMAA. Over 30 to 149 the chain is Periplasmic; sequence LSSNVNHFYN…AQDAAPAQTY (120 aa). H124 and Y128 together coordinate heme.

Belongs to the CcmE/CycJ family.

Its subcellular location is the cell inner membrane. Its function is as follows. Heme chaperone required for the biogenesis of c-type cytochromes. Transiently binds heme delivered by CcmC and transfers the heme to apo-cytochromes in a process facilitated by CcmF and CcmH. In Hahella chejuensis (strain KCTC 2396), this protein is Cytochrome c-type biogenesis protein CcmE.